Here is a 323-residue protein sequence, read N- to C-terminus: Zinc finger C2HC domain-containing protein 1A (323 aa).

A C2HC/C3H-type 1 zinc finger spans residues glutamate 7–lysine 36. Zn(2+) contacts are provided by cysteine 11, cysteine 14, histidine 26, and cysteine 30. The disordered stretch occupies residues valine 35–lysine 75. The segment covering threonine 40 to glycine 50 has biased composition (basic and acidic residues). Residues aspartate 110–arginine 139 form a C2HC/C3H-type 2 zinc finger. Cysteine 114, cysteine 117, histidine 129, and cysteine 133 together coordinate Zn(2+). The segment at alanine 138–aspartate 273 is disordered. Positions lysine 208–glutamine 226 are enriched in polar residues.

The protein belongs to the ZC2HC1 family. Requires Zn(2+) as cofactor.

The chain is Zinc finger C2HC domain-containing protein 1A (zc2hc1a) from Xenopus laevis (African clawed frog).